The following is a 313-amino-acid chain: Protein FixB (313 aa).

255-283 (LYLAVGISGQIQHMVGANGAQTIFAINKD) lines the FAD pocket.

Belongs to the ETF alpha-subunit/FixB family. As to quaternary structure, heterodimer of FixA and FixB.

It functions in the pathway amine and polyamine metabolism; carnitine metabolism. Functionally, required for anaerobic carnitine reduction. May bring reductant to CaiA. The chain is Protein FixB from Salmonella agona (strain SL483).